The sequence spans 712 residues: Lactoperoxidase (712 aa).

A signal peptide spans 1–26 (MRVLLHLPALLASLILLQAAASTTRA). Positions 27–80 (QTTRTSAISDTVSQAKVQVNKAFLDSRTRLKTAMSSETPTSRQLSEYLKHAKGR) are excised as a propeptide. N-linked (GlcNAc...) asparagine glycosylation is present at Asn-106. Cys-132 and Cys-145 are disulfide-bonded. The N-linked (GlcNAc...) asparagine glycan is linked to Asn-212. Asp-225 contacts heme b. The active-site Proton acceptor is the His-226. Residue Asp-227 coordinates Ca(2+). Disulfide bonds link Cys-246–Cys-256 and Cys-250–Cys-274. Ca(2+) contacts are provided by Thr-301, Phe-303, Asp-305, and Ser-307. Ser-315 is subject to Phosphoserine. 2 N-linked (GlcNAc...) asparagine glycosylation sites follow: Asn-322 and Asn-358. Cys-354 and Cys-365 form a disulfide bridge. Heme b is bound by residues Glu-375 and His-468. At Tyr-482 the chain carries 3'-nitrotyrosine. Disulfide bonds link Cys-573–Cys-630 and Cys-671–Cys-696.

This sequence belongs to the peroxidase family. XPO subfamily. Requires Ca(2+) as cofactor. Heme b is required as a cofactor. In terms of tissue distribution, mammary gland, milk and salivary gland. Found in bronchial submucosal glands.

The protein resides in the secreted. The protein localises to the cytoplasm. The catalysed reaction is 2 a phenolic donor + H2O2 = 2 a phenolic radical donor + 2 H2O. It carries out the reaction thiocyanate + H2O2 + H(+) = hypothiocyanous acid + H2O. The enzyme catalyses iodide + H2O2 = hypoiodite + H2O. Heme-containing oxidoreductase which catalyzes the conversion of thiocyanate (SCN(-)) into antimicrobial agent hypothiocyanous acid (OSCN(-)) in the presence of hydrogen peroxide (H2O2). Also involved in the conversion of iodide (I(-)) into hypoiodite (IO(-)) in the presence of H2O2. Responsible for the inactivation of a wide range of micro-organisms and hence, important component of defense mechanism. Shows antibacterial properties against Pseudomonas aeruginosa. The lactoperoxidase-SCN(-)-H2O2 system shows antibacterial properties against Burkholderia cepacia and Haemophilus influenzae in vitro. Present in mammary and salivary gland secretions and may contribute to airway host defense against infection. May contribute to maintaining an appropriate H2O2 cellular level, therefore protecting cells from H2O2-caused injuries and inflammation. The polypeptide is Lactoperoxidase (Homo sapiens (Human)).